Here is a 109-residue protein sequence, read N- to C-terminus: MLDKTLRMNYLFDFYHSLLTEKQRNYMSYYYLDDLSLGEIADEYDVSRQAVYDNIRRTEAMLEEYEQKLRLLEKFETRRSLLAELRKAIASDQAVEACNSLIDRIEKLD.

The protein belongs to the UPF0122 family.

Its function is as follows. Might take part in the signal recognition particle (SRP) pathway. This is inferred from the conservation of its genetic proximity to ftsY/ffh. May be a regulatory protein. The polypeptide is UPF0122 protein ABC2295 (Shouchella clausii (strain KSM-K16) (Alkalihalobacillus clausii)).